We begin with the raw amino-acid sequence, 1372 residues long: MSVVNFYGQLSNTQQFDQIRINIASPDQVRSWSFGEVTKPETINYRTFKPEKDGLFCARIFGPVKDYECLCGKYKRMKNRGITCEKCGVEVTVSRVRRERMGHIELAAPVAHIWFLKSLPSRISTLLDMTMRDVEKILYFENYVVVDPGLSILQKGELLTEEELQKAKDKYGEDAFTASIGAEVIQQMLKELDFSKLKQELYEELQTTSSEVKKKKLVKRLKLVENFLESENKPEWMIMDVLPVIPPEIRPLVMLDGGRFATSDLNELYRRVINRNNRLKKLIESKAPDIIVRNEKRMLQEAVDALFDNGRRGRAAKNANKRPFKSLSDMLKGKQGRFRQNLLGKRVDYSGRSVIVVGPELKLHQCGLPKKMALELFKPFIYSKLELYGIATTIKAAKRMVEAEKSEVWDVLEEVIREHPVLLNRAPTLHRLGIQAFEPLLIEGKAIQLHPLVCAAFNADFDGDQMAVHIPLSIEAQLEARVFMMSTNNILSPANGRPIIVPDKDIVLGLYYLTLAFDNEVGAGMMFSDLAEMEHALYNKFITIHTKIKYRRNQLNAEGKMVPVIIDTTYGRLMVGELLPSNPNIEFKFINKQLTKKDISLVIDLVYRHCGQKATVIFADQLMKLGFKYACSSGISFGMDDMVVPESKSTHINKTQLEIKEFEQQYSNGLITYGEKYNKVVDAWSRCTDRVANDMMKEIATLPVNDAPNHQKINAIYMMAISGARGSFQQIKQLGGMRGLMTKSNGQIIQTPIISNFKEGLTEFECFNSANGMRKGQIDTALKTASSGYLTRKLVDVAQDCIITEKDCGTDKGIEVKSVIEGGEVIVPLAEKILGRTAAIDIFHPVTNDLILNKGELINEAKLEQIESAGLDRIMIKSVLTCESTTGICSICYGRDLATGTLVSEGEAIGVIAAQSIGEPGTQLTMRTFHIGGAATKGAEVSSVDASYDAKVKIISRNVVINSEERKIVMSRNCELLLLDNHGNEKARHKIPYGARLLVDDGDMVIKTQKLAEWDPYTIPIITEKSGKVLFKDMVEGISIRDVTDEATGIPSKVIIESKQYSRGAELRPRIQLLDAKGEVITLSNGLEARYYLPVGAVLSVEDGVQISVGDIIARIPKESTTTKDITGGLPRVAELVEARRPKDHAVIAEIDGRVEFGKDYKSKRRIIIHPIDETMSIEYMVPKGKHVVVNEGDFVKKGDLLIDGNPVLQDILKVMGVEVLANYIVNEVQAVYRLQGVKIDDKHIEVIIRQMLQKVEVTDSGGTTLLAGEKIDRHEFDEINEKAIKNGLKPAEAQLILQGITKASLQTRSFISAASFQETTRVLTEAAIAGKVDKLRGLKENVIVGRLVPAGTGYFMDKMRKAAVKLDEENV.

The Zn(2+) site is built by cysteine 69, cysteine 71, cysteine 84, and cysteine 87. Mg(2+) contacts are provided by aspartate 460, aspartate 462, and aspartate 464. Positions 808, 882, 889, and 892 each coordinate Zn(2+).

It belongs to the RNA polymerase beta' chain family. As to quaternary structure, the RNAP catalytic core consists of 2 alpha, 1 beta, 1 beta' and 1 omega subunit. When a sigma factor is associated with the core the holoenzyme is formed, which can initiate transcription. It depends on Mg(2+) as a cofactor. Requires Zn(2+) as cofactor.

It carries out the reaction RNA(n) + a ribonucleoside 5'-triphosphate = RNA(n+1) + diphosphate. Its function is as follows. DNA-dependent RNA polymerase catalyzes the transcription of DNA into RNA using the four ribonucleoside triphosphates as substrates. The protein is DNA-directed RNA polymerase subunit beta' of Rickettsia rickettsii (strain Iowa).